The chain runs to 236 residues: Small ribosomal subunit protein uS2c (236 aa).

The protein belongs to the universal ribosomal protein uS2 family.

The protein resides in the plastid. The protein localises to the chloroplast. The protein is Small ribosomal subunit protein uS2c (rps2) of Nandina domestica (Heavenly bamboo).